Consider the following 282-residue polypeptide: Protein canopy homolog 3 (282 aa).

An N-terminal signal peptide occupies residues 1–33 (MEPLPEPASGPRPRPHRLLLLSLLLLLLPLLPA). The region spanning 53-275 (SKCEVCKYVA…EGIQKASPLT (223 aa)) is the Saposin B-type domain. 3 disulfide bridges follow: C55/C212, C58/C200, and C110/C172. A glycan (N-linked (GlcNAc...) asparagine) is linked at N159. Residues 159–185 (NETSAEVADLKKQCDVLVEEFEEVIED) are a coiled coil. Positions 221-282 (KGDTAALGGK…PLTHSPPDEL (62 aa)) are disordered. Over residues 255–266 (DLDGDPSPEEDE) the composition is skewed to acidic residues.

This sequence belongs to the canopy family. As to quaternary structure, interacts with HSP90B1; this interaction is disrupted in the presence of ATP. Interacts with TLR1, TLR2, TLR4 and TLR9.

Its subcellular location is the endoplasmic reticulum. Toll-like receptor (TLR)-specific co-chaperone for HSP90B1. Required for proper TLR folding, except that of TLR3, and hence controls TLR exit from the endoplasmic reticulum. Consequently, required for both innate and adaptive immune responses. The sequence is that of Protein canopy homolog 3 (CNPY3) from Bos taurus (Bovine).